The chain runs to 477 residues: Glycogen synthase (477 aa).

ADP-alpha-D-glucose is bound at residue lysine 15.

It belongs to the glycosyltransferase 1 family. Bacterial/plant glycogen synthase subfamily.

The catalysed reaction is [(1-&gt;4)-alpha-D-glucosyl](n) + ADP-alpha-D-glucose = [(1-&gt;4)-alpha-D-glucosyl](n+1) + ADP + H(+). The protein operates within glycan biosynthesis; glycogen biosynthesis. Its function is as follows. Synthesizes alpha-1,4-glucan chains using ADP-glucose. The protein is Glycogen synthase of Myxococcus xanthus (strain DK1622).